Consider the following 506-residue polypeptide: Anaerobic nitric oxide reductase transcription regulator NorR (506 aa).

At Asp-57 the chain carries 4-aspartylphosphate. One can recognise a Sigma-54 factor interaction domain in the interval 187–416; that stretch reads MIGLSPAMTQ…LEHAIHRAVV (230 aa). Residues 215 to 222 and 278 to 287 each bind ATP; these read GETGTGKE and ADNGTLFLDE. A DNA-binding region (H-T-H motif) is located at residues 481–500; that stretch reads WAASARALETDVANLHRLAK.

It participates in nitrogen metabolism; nitric oxide reduction. Functionally, required for the expression of anaerobic nitric oxide (NO) reductase, acts as a transcriptional activator for at least the norVW operon. Activation also requires sigma-54. The chain is Anaerobic nitric oxide reductase transcription regulator NorR from Salmonella choleraesuis (strain SC-B67).